A 371-amino-acid chain; its full sequence is ETS-related transcription factor Elf-3 (371 aa).

A PNT domain is found at 46–132 (NPQMSLEGTE…AQLRDLTSSS (87 aa)). Positions 137–145 (SWIIELLEK) match the 9aaTAD motif. A disordered region spans residues 173–251 (GQQASPYHPG…HGKRKRGRPR (79 aa)). Residues 181–216 (PGSCGAGAPSPGSSDVSTAGTGASRSSHSSDSGGSD) are compositionally biased toward low complexity. Positions 231–241 (GFRDCKKGDPK) are enriched in basic and acidic residues. Positions 242 to 251 (HGKRKRGRPR) are enriched in basic residues. The ETS DNA-binding region spans 273 to 355 (THLWEFIRDI…DGRRLVYKFG (83 aa)).

It belongs to the ETS family. In terms of assembly, interacts with TBP. Interacts with CREBBP and EP300; these act as transcriptional coactivators of ELF3 and positively modulate its function. Interacts with XRCC5/KU86 and XRCC6/KU70; these inhibit the ability of ELF3 to bind DNA and negatively modulate its transcriptional activity. Associated with CLND7 and POU2F3. Interacts with ZNF768. As to expression, expressed exclusively in tissues containing a high content of terminally differentiated epithelial cells including mammary gland, colon, trachea, kidney, prostate, uterus, stomach and skin.

Its subcellular location is the cytoplasm. It is found in the nucleus. Its function is as follows. Transcriptional activator that binds and transactivates ETS sequences containing the consensus nucleotide core sequence GGA[AT]. Acts synergistically with POU2F3 to transactivate the SPRR2A promoter and with RUNX1 to transactivate the ANGPT1 promoter. Also transactivates collagenase, CCL20, CLND7, FLG, KRT8, NOS2, PTGS2, SPRR2B, TGFBR2 and TGM3 promoters. Represses KRT4 promoter activity. Involved in mediating vascular inflammation. May play an important role in epithelial cell differentiation and tumorigenesis. May be a critical downstream effector of the ERBB2 signaling pathway. May be associated with mammary gland development and involution. Plays an important role in the regulation of transcription with TATA-less promoters in preimplantation embryos, which is essential in preimplantation development. This is ETS-related transcription factor Elf-3 from Homo sapiens (Human).